The chain runs to 450 residues: UDP-N-acetylmuramoylalanine--D-glutamate ligase (450 aa).

119–125 serves as a coordination point for ATP; it reads GSNGKTT.

It belongs to the MurCDEF family.

Its subcellular location is the cytoplasm. The catalysed reaction is UDP-N-acetyl-alpha-D-muramoyl-L-alanine + D-glutamate + ATP = UDP-N-acetyl-alpha-D-muramoyl-L-alanyl-D-glutamate + ADP + phosphate + H(+). It participates in cell wall biogenesis; peptidoglycan biosynthesis. Cell wall formation. Catalyzes the addition of glutamate to the nucleotide precursor UDP-N-acetylmuramoyl-L-alanine (UMA). The protein is UDP-N-acetylmuramoylalanine--D-glutamate ligase of Bacillus cereus (strain ATCC 14579 / DSM 31 / CCUG 7414 / JCM 2152 / NBRC 15305 / NCIMB 9373 / NCTC 2599 / NRRL B-3711).